Here is a 619-residue protein sequence, read N- to C-terminus: Chaperone protein DnaK (619 aa).

T179 bears the Phosphothreonine; by autocatalysis mark. Positions 584-619 are disordered; sequence QAKAQGAAGPQPGAQAQGQPNDGGKEDVVEAEVVDK. The segment covering 585-605 has biased composition (low complexity); the sequence is AKAQGAAGPQPGAQAQGQPND. Over residues 606-619 the composition is skewed to basic and acidic residues; it reads GGKEDVVEAEVVDK.

Belongs to the heat shock protein 70 family.

In terms of biological role, acts as a chaperone. The polypeptide is Chaperone protein DnaK (Elusimicrobium minutum (strain Pei191)).